A 203-amino-acid chain; its full sequence is Pyridoxine/pyridoxamine 5'-phosphate oxidase (203 aa).

Residues Arg50–Lys55, Tyr65–Thr66, Lys72, and Gln94 contribute to the FMN site. Lys55 is a substrate binding site. Positions 112, 116, and 120 each coordinate substrate. FMN contacts are provided by residues Gln129–Ser130 and Trp174. Residue Arg180–His182 participates in substrate binding. Arg184 contacts FMN.

The protein belongs to the pyridoxamine 5'-phosphate oxidase family. As to quaternary structure, homodimer. FMN serves as cofactor.

The enzyme catalyses pyridoxamine 5'-phosphate + O2 + H2O = pyridoxal 5'-phosphate + H2O2 + NH4(+). It catalyses the reaction pyridoxine 5'-phosphate + O2 = pyridoxal 5'-phosphate + H2O2. It participates in cofactor metabolism; pyridoxal 5'-phosphate salvage; pyridoxal 5'-phosphate from pyridoxamine 5'-phosphate: step 1/1. Its pathway is cofactor metabolism; pyridoxal 5'-phosphate salvage; pyridoxal 5'-phosphate from pyridoxine 5'-phosphate: step 1/1. Functionally, catalyzes the oxidation of either pyridoxine 5'-phosphate (PNP) or pyridoxamine 5'-phosphate (PMP) into pyridoxal 5'-phosphate (PLP). In Brucella anthropi (strain ATCC 49188 / DSM 6882 / CCUG 24695 / JCM 21032 / LMG 3331 / NBRC 15819 / NCTC 12168 / Alc 37) (Ochrobactrum anthropi), this protein is Pyridoxine/pyridoxamine 5'-phosphate oxidase.